The following is a 212-amino-acid chain: 3-demethoxyubiquinol 3-hydroxylase (212 aa).

Glu-61, Glu-91, His-94, Glu-143, Glu-175, and His-178 together coordinate Fe cation.

Belongs to the COQ7 family. Fe cation serves as cofactor.

The protein localises to the cell membrane. The catalysed reaction is a 5-methoxy-2-methyl-3-(all-trans-polyprenyl)benzene-1,4-diol + AH2 + O2 = a 3-demethylubiquinol + A + H2O. The protein operates within cofactor biosynthesis; ubiquinone biosynthesis. Catalyzes the hydroxylation of 2-nonaprenyl-3-methyl-6-methoxy-1,4-benzoquinol during ubiquinone biosynthesis. In Paraburkholderia phytofirmans (strain DSM 17436 / LMG 22146 / PsJN) (Burkholderia phytofirmans), this protein is 3-demethoxyubiquinol 3-hydroxylase.